The following is an 84-amino-acid chain: Beta-toxin Ct16 (84 aa).

Positions 1–19 (MNYFILLFVATFLLLDVNC) are cleaved as a signal peptide. One can recognise an LCN-type CS-alpha/beta domain in the interval 21–80 (KDGYPVDANNCKFECWKNEYCDELCKAKRAESGYCYKLKLSCWCEGLPDDEPTKTSDRCY). 4 disulfides stabilise this stretch: Cys-31–Cys-79, Cys-35–Cys-55, Cys-41–Cys-62, and Cys-45–Cys-64. Thr-82 carries the threonine amide modification.

The protein belongs to the long (4 C-C) scorpion toxin superfamily. Sodium channel inhibitor family. Alpha subfamily. In terms of tissue distribution, expressed by the venom gland.

The protein resides in the secreted. Alpha toxins bind voltage-independently at site-3 of sodium channels (Nav) and inhibit the inactivation of the activated channels, thereby blocking neuronal transmission. Is possibly toxic to mice. The chain is Beta-toxin Ct16 from Centruroides tecomanus (Scorpion).